The chain runs to 1100 residues: MAIAHFSASIVSRGSGRSVVLSAAYRHCAKMEYEREARTIDYTRKQGLLHEEFVLPADAPKWVRSLIADRSVSGASEAFWNKVEAFEKRADAQLARDLTIALPLELSAEQNIALVRDFVENHILAKGMVADWVYHENPGNPHIHLMTTLRPLSDESFGSKKVAVIGEDGQPVRTKSGKILYELWAGSTDDFNVLRDGWFERLNHHLALGGIDLKIDGRSYEKQGINLEPTIHLGVGAKAIERKAEQRGVRPELERVELNEQRRSENTRRILNNPAIVLDLITREKSVFDERDVAKVLHRYIDDPALFQQLMIKIILNRQVLRLQRETIDFSTGEKLPARYSTRAMIRLEATMARQATWLSNREGRGVSPTALDATFRRHERLSDEQKAAIEHVAGPARIAAVVGRAGAGKTTMMKAAREAWELAGYHVVGGALAGKAAEGLEKEAGIQSRTLASWELRWKRGRDLLDDKTIFIMDEAGMVASKQMAGFVDTAVRAGAKIVLVGDPEQLQPIEAGAAFRAIADRIGYAELETIYRQREEWMRKASLDLARGNVENALSAYRANVRITGERLKAEAVERLIADWNHDYDQTKTILILAHLRRDVRMLNVMAREKLVERGMVGEGHLFRTADGERRFDAGDQIVFLKNEGSLGLKNGMIGHVVVAAANRIVATVGEGDQRRQVIVEQRFYNNLDHGYATTIHKSQGATVDRVKVLASLSLDRHLTYVAMTRHREDLQLYYGTRSFSFNGGLAKVLSRRQAKETTLDYEHGQFYREALRFAETRGLHVVQVARTMVRDRLDWTLRQKAKLVDLSRRLAAFAAHLGITQSPKTQTMKETAPMVAGIKTFSGSVSDIVGDRLGTDPSLKRQWEEVSARFAYVFADPETAFRAMNFAALLADKEVAKQILQKLEAEPGSIGPLKGKTGILASKPEREARRVAEVNVPALKRDLEQYLRMRETVTQRLQTDEQSLRQRVSIDIPALSPAARVVRERVRDAIDRNDLPAAIAYALSNRETKLEIDGFNQAVTERFGERTLLSNAAREPSGKLYEKLSEGMKPEQKEELKQAWPVMRTAQQLVAHERTVHSLKLAEEHRLTQRQTPVLKQ.

404-411 serves as a coordination point for ATP; the sequence is GRAGAGKT.

Belongs to the MobA/MobL family.

The chain is Conjugal transfer protein TraA (traA) from Rhizobium radiobacter (Agrobacterium tumefaciens).